The following is a 779-amino-acid chain: Phosphoribosylformylglycinamidine synthase subunit PurL (779 aa).

His52 is a catalytic residue. ATP is bound by residues Tyr55 and Lys94. Glu96 provides a ligand contact to Mg(2+). Residues 97 to 100 (SHNH) and Arg119 contribute to the substrate site. The active-site Proton acceptor is His98. Asp120 is a Mg(2+) binding site. Gln243 provides a ligand contact to substrate. A Mg(2+)-binding site is contributed by Asp271. Position 315-317 (315-317 (ESQ)) interacts with substrate. The ATP site is built by Asn523 and Gly560. Asn561 serves as a coordination point for Mg(2+). Residue Ser563 participates in substrate binding.

Belongs to the FGAMS family. In terms of assembly, monomer. Part of the FGAM synthase complex composed of 1 PurL, 1 PurQ and 2 PurS subunits.

It localises to the cytoplasm. It carries out the reaction N(2)-formyl-N(1)-(5-phospho-beta-D-ribosyl)glycinamide + L-glutamine + ATP + H2O = 2-formamido-N(1)-(5-O-phospho-beta-D-ribosyl)acetamidine + L-glutamate + ADP + phosphate + H(+). It participates in purine metabolism; IMP biosynthesis via de novo pathway; 5-amino-1-(5-phospho-D-ribosyl)imidazole from N(2)-formyl-N(1)-(5-phospho-D-ribosyl)glycinamide: step 1/2. Its function is as follows. Part of the phosphoribosylformylglycinamidine synthase complex involved in the purines biosynthetic pathway. Catalyzes the ATP-dependent conversion of formylglycinamide ribonucleotide (FGAR) and glutamine to yield formylglycinamidine ribonucleotide (FGAM) and glutamate. The FGAM synthase complex is composed of three subunits. PurQ produces an ammonia molecule by converting glutamine to glutamate. PurL transfers the ammonia molecule to FGAR to form FGAM in an ATP-dependent manner. PurS interacts with PurQ and PurL and is thought to assist in the transfer of the ammonia molecule from PurQ to PurL. This is Phosphoribosylformylglycinamidine synthase subunit PurL from Prochlorococcus marinus (strain MIT 9215).